Here is a 308-residue protein sequence, read N- to C-terminus: Acetyl-coenzyme A carboxylase carboxyl transferase subunit alpha (308 aa).

Residues 36–286 form the CoA carboxyltransferase C-terminal domain; that stretch reads ELEKEVSSVY…ESYFLKAFEE (251 aa).

It belongs to the AccA family. Acetyl-CoA carboxylase is a heterohexamer composed of biotin carboxyl carrier protein (AccB), biotin carboxylase (AccC) and two subunits each of ACCase subunit alpha (AccA) and ACCase subunit beta (AccD).

It is found in the cytoplasm. The enzyme catalyses N(6)-carboxybiotinyl-L-lysyl-[protein] + acetyl-CoA = N(6)-biotinyl-L-lysyl-[protein] + malonyl-CoA. The protein operates within lipid metabolism; malonyl-CoA biosynthesis; malonyl-CoA from acetyl-CoA: step 1/1. In terms of biological role, component of the acetyl coenzyme A carboxylase (ACC) complex. First, biotin carboxylase catalyzes the carboxylation of biotin on its carrier protein (BCCP) and then the CO(2) group is transferred by the carboxyltransferase to acetyl-CoA to form malonyl-CoA. The chain is Acetyl-coenzyme A carboxylase carboxyl transferase subunit alpha from Helicobacter hepaticus (strain ATCC 51449 / 3B1).